The following is a 485-amino-acid chain: Transcription factor ETV6 (485 aa).

Positions 1-10 (MSETPAQSSI) are enriched in polar residues. The interval 1–32 (MSETPAQSSIKQERISYTPPESPVASHRSSTP) is disordered. At Lys-11 the chain carries N6-acetyllysine; alternate. Lys-11 is covalently cross-linked (Glycyl lysine isopeptide (Lys-Gly) (interchain with G-Cter in SUMO2); alternate). At Thr-18 the chain carries Phosphothreonine. Ser-22 bears the Phosphoserine mark. The region spanning 41 to 125 (ALRMEEDSIH…ELLQHILKQR (85 aa)) is the PNT domain. Residues 157–210 (NCVQRTPRTPAESVHHNPPTIELLHRPRSPITTNHRPSPDPEQQRPQRSPLDNM) form a disordered region. Position 165 is a phosphothreonine (Thr-165). Residues Ser-215, Ser-240, and Ser-251 each carry the phosphoserine modification. Lys-284 participates in a covalent cross-link: Glycyl lysine isopeptide (Lys-Gly) (interchain with G-Cter in SUMO2). An N6-acetyllysine; alternate modification is found at Lys-298. Lys-298 is covalently cross-linked (Glycyl lysine isopeptide (Lys-Gly) (interchain with G-Cter in SUMO2); alternate). Ser-319 bears the Phosphoserine mark. A DNA-binding region (ETS) is located at residues 335–416 (RLLWDYVYQL…PGQRLLFRFM (82 aa)). Glycyl lysine isopeptide (Lys-Gly) (interchain with G-Cter in SUMO2) cross-links involve residues Lys-399 and Lys-417. The disordered stretch occupies residues 440-485 (EQTYQEDEPTIASPVGWPRGNLPTGTAGGVMEAGELGVAVKEETRE).

This sequence belongs to the ETS family. As to quaternary structure, can form homodimers or heterodimers with TEL2 or FLI1. Interacts with L3MBTL1 and HDAC9.

It localises to the nucleus. In terms of biological role, transcriptional repressor; binds to the DNA sequence 5'-CCGGAAGT-3'. Plays a role in hematopoiesis and malignant transformation. The protein is Transcription factor ETV6 (Etv6) of Mus musculus (Mouse).